A 258-amino-acid chain; its full sequence is UPF0246 protein Pnuc_0753 (258 aa).

The protein belongs to the UPF0246 family.

This is UPF0246 protein Pnuc_0753 from Polynucleobacter asymbioticus (strain DSM 18221 / CIP 109841 / QLW-P1DMWA-1) (Polynucleobacter necessarius subsp. asymbioticus).